The chain runs to 176 residues: Cytochrome b (176 aa).

3 helical membrane-spanning segments follow: residues 33-53 (FGSL…FLAM), 77-98 (WLLR…YLHI), and 113-133 (WNVG…GYVL). Heme b-binding residues include H83 and H97.

Belongs to the cytochrome b family. As to quaternary structure, the cytochrome bc1 complex contains 11 subunits: 3 respiratory subunits (MT-CYB, CYC1 and UQCRFS1), 2 core proteins (UQCRC1 and UQCRC2) and 6 low-molecular weight proteins (UQCRH/QCR6, UQCRB/QCR7, UQCRQ/QCR8, UQCR10/QCR9, UQCR11/QCR10 and a cleavage product of UQCRFS1). This cytochrome bc1 complex then forms a dimer. The cofactor is heme b.

It is found in the mitochondrion inner membrane. In terms of biological role, component of the ubiquinol-cytochrome c reductase complex (complex III or cytochrome b-c1 complex) that is part of the mitochondrial respiratory chain. The b-c1 complex mediates electron transfer from ubiquinol to cytochrome c. Contributes to the generation of a proton gradient across the mitochondrial membrane that is then used for ATP synthesis. This Nyctinomops aurispinosus (Peale's free-tailed bat) protein is Cytochrome b (MT-CYB).